We begin with the raw amino-acid sequence, 464 residues long: 2-oxoadipate dioxygenase/decarboxylase (464 aa).

3 residues coordinate 2-oxoadipate: H70, R74, and H226. Residue H70 participates in Fe(2+) binding. Fe(2+)-binding residues include H226 and E294. V402 is a binding site for 2-oxoadipate.

It belongs to the 2-oxoadipate dioxygenase/decarboxylase family. Requires Fe(2+) as cofactor.

It catalyses the reaction 2-oxoadipate + O2 = (R)-2-hydroxyglutarate + CO2. Its pathway is amino-acid degradation. Its activity is regulated as follows. Inhibited by EDTA. Functionally, catalyzes the decarboxylation and hydroxylation of 2-oxoadipate (2OA) to form D-2-hydroxyglutarate (D-2-HGA). Is specific for 2-oxoadipate. Is involved in a D-lysine catabolic pathway. This chain is 2-oxoadipate dioxygenase/decarboxylase, found in Pseudomonas putida (strain ATCC 47054 / DSM 6125 / CFBP 8728 / NCIMB 11950 / KT2440).